Consider the following 221-residue polypeptide: Thyrotroph embryonic factor (221 aa).

The disordered stretch occupies residues 72–116 (ESASSSTASPPSSSTAVFQPSETVSSTESSLEKERETPSPIDPNC). Low complexity predominate over residues 73 to 100 (SASSSTASPPSSSTAVFQPSETVSSTES). Residues 173–221 (DEKYWTRRKKNNVAAKRSRDARRLKENQITIRAAFLEKENTALRTEVAD) form the bZIP domain. Residues 175-195 (KYWTRRKKNNVAAKRSRDARR) are basic motif. The tract at residues 196–203 (LKENQITI) is leucine-zipper.

This sequence belongs to the bZIP family. PAR subfamily. As to quaternary structure, binds DNA as a homodimer or a heterodimer. Can form a heterodimer with DBP.

It localises to the nucleus. Transcription factor that binds to and transactivates the TSHB promoter. Binds to a minimal DNA-binding sequence 5'-[TC][AG][AG]TTA[TC][AG]-3'. The protein is Thyrotroph embryonic factor (TEF) of Phodopus sungorus (Striped hairy-footed hamster).